We begin with the raw amino-acid sequence, 397 residues long: Putative nickel insertion protein (397 aa).

The protein belongs to the LarC family.

The sequence is that of Putative nickel insertion protein from Synechococcus sp. (strain JA-3-3Ab) (Cyanobacteria bacterium Yellowstone A-Prime).